Consider the following 259-residue polypeptide: MALLQKTRIINSMLQAAAGKPVNFKEMAETLRDVIDSNIFVVSRRGKLLGYSINQQIENDRMKKMLEDRQFPEEYTRNLFNVPETSSNLDINSEYTAFPVENRDLFQAGLTTIVPIIGGGERLGTLILSRLQDQFEDDDLILAEYGATVVGMEILREKAEEIEEEARSKAVVQMAISSLSYSELEAIEHIFEELDGNEGLLVASKIADRVGITRSVIVNALRKLESAGVIESRSLGMKGTYIKVLNNKFLIELENLKSH.

Residues 1–155 are GAF domain; that stretch reads MALLQKTRII…GATVVGMEIL (155 aa). A DNA-binding region (H-T-H motif) is located at residues 203–222; that stretch reads ASKIADRVGITRSVIVNALR. Position 215 is a phosphoserine (S215).

The protein belongs to the CodY family.

It is found in the cytoplasm. Functionally, DNA-binding global transcriptional regulator which is involved in the adaptive response to starvation and acts by directly or indirectly controlling the expression of numerous genes in response to nutrient availability. During rapid exponential growth, CodY is highly active and represses genes whose products allow adaptation to nutrient depletion. In Bacillus velezensis (strain DSM 23117 / BGSC 10A6 / LMG 26770 / FZB42) (Bacillus amyloliquefaciens subsp. plantarum), this protein is Global transcriptional regulator CodY.